We begin with the raw amino-acid sequence, 208 residues long: Holliday junction resolvase RecU (208 aa).

Residues Thr87, Asp89, Glu102, and Gln121 each coordinate Mg(2+).

This sequence belongs to the RecU family. Requires Mg(2+) as cofactor.

Its subcellular location is the cytoplasm. It catalyses the reaction Endonucleolytic cleavage at a junction such as a reciprocal single-stranded crossover between two homologous DNA duplexes (Holliday junction).. In terms of biological role, endonuclease that resolves Holliday junction intermediates in genetic recombination. Cleaves mobile four-strand junctions by introducing symmetrical nicks in paired strands. Promotes annealing of linear ssDNA with homologous dsDNA. Required for DNA repair, homologous recombination and chromosome segregation. The chain is Holliday junction resolvase RecU from Staphylococcus aureus (strain MRSA252).